Consider the following 254-residue polypeptide: 2,3-bisphosphoglycerate-dependent phosphoglycerate mutase (254 aa).

Substrate contacts are provided by residues 15–22 (RHGQSEWN), 28–29 (TG), Arg-67, 94–97 (ERHY), Lys-105, 121–122 (RR), and 188–189 (GN). Catalysis depends on His-16, which acts as the Tele-phosphohistidine intermediate. The active-site Proton donor/acceptor is the Glu-94.

It belongs to the phosphoglycerate mutase family. BPG-dependent PGAM subfamily.

The enzyme catalyses (2R)-2-phosphoglycerate = (2R)-3-phosphoglycerate. Its pathway is carbohydrate degradation; glycolysis; pyruvate from D-glyceraldehyde 3-phosphate: step 3/5. Functionally, catalyzes the interconversion of 2-phosphoglycerate and 3-phosphoglycerate. This Corynebacterium jeikeium (strain K411) protein is 2,3-bisphosphoglycerate-dependent phosphoglycerate mutase.